A 95-amino-acid polypeptide reads, in one-letter code: Small ribosomal subunit protein uS19 (95 aa).

Belongs to the universal ribosomal protein uS19 family.

Its function is as follows. Protein S19 forms a complex with S13 that binds strongly to the 16S ribosomal RNA. The sequence is that of Small ribosomal subunit protein uS19 from Chloroflexus aggregans (strain MD-66 / DSM 9485).